A 196-amino-acid chain; its full sequence is Xanthine phosphoribosyltransferase (196 aa).

Residues Leu-20 and Asn-27 each contribute to the xanthine site. 128-132 (ATGAA) provides a ligand contact to 5-phospho-alpha-D-ribose 1-diphosphate. Residue Lys-156 coordinates xanthine.

It belongs to the purine/pyrimidine phosphoribosyltransferase family. Xpt subfamily. As to quaternary structure, homodimer.

The protein localises to the cytoplasm. The enzyme catalyses XMP + diphosphate = xanthine + 5-phospho-alpha-D-ribose 1-diphosphate. It participates in purine metabolism; XMP biosynthesis via salvage pathway; XMP from xanthine: step 1/1. Its function is as follows. Converts the preformed base xanthine, a product of nucleic acid breakdown, to xanthosine 5'-monophosphate (XMP), so it can be reused for RNA or DNA synthesis. The polypeptide is Xanthine phosphoribosyltransferase (Brevibacillus brevis (strain 47 / JCM 6285 / NBRC 100599)).